Consider the following 505-residue polypeptide: uncharacterized protein (505 aa).

The tract at residues 461 to 480 is disordered; the sequence is RTDVHPGNSDDEGAYSSADS.

This sequence to M.jannaschii MJ0787.

This is an uncharacterized protein from Methanothermobacter thermautotrophicus (strain ATCC 29096 / DSM 1053 / JCM 10044 / NBRC 100330 / Delta H) (Methanobacterium thermoautotrophicum).